Reading from the N-terminus, the 66-residue chain is Ornithorhynchus venom defensin-like peptide A (66 aa).

The signal sequence occupies residues 1 to 22 (MRLTYLLLLLVAVLFQAGSGSA). Residues 23–24 (EP) constitute a propeptide that is removed on maturation. Intrachain disulfides connect C33/C63, C40/C56, and C48/C64.

In terms of tissue distribution, produced by the crural gland and detected in venom from the spur located on each male hind leg. Is the only OvDLP that is expressed in venom gland alone.

The protein resides in the secreted. In terms of biological role, does not show antimicrobial, myotoxic, hemolytic and cell-promoting activities. This chain is Ornithorhynchus venom defensin-like peptide A, found in Ornithorhynchus anatinus (Duckbill platypus).